The following is a 317-amino-acid chain: Large ribosomal subunit protein uL10 (317 aa).

Phosphotyrosine is present on tyrosine 24. At threonine 59 the chain carries Phosphothreonine. A Glycyl lysine isopeptide (Lys-Gly) (interchain with G-Cter in ubiquitin) cross-link involves residue lysine 264. Positions alanine 294 to aspartate 317 are disordered. A Glycyl lysine isopeptide (Lys-Gly) (interchain with G-Cter in SUMO1); alternate cross-link involves residue lysine 297. Lysine 297 is covalently cross-linked (Glycyl lysine isopeptide (Lys-Gly) (interchain with G-Cter in SUMO2); alternate). A compositionally biased stretch (acidic residues) spans glutamate 302 to methionine 311. A phosphoserine mark is found at serine 304 and serine 307.

The protein belongs to the universal ribosomal protein uL10 family. As to quaternary structure, P0 forms a pentameric complex by interaction with dimers of P1 and P2. Identified in a IGF2BP1-dependent mRNP granule complex containing untranslated mRNAs. Interacts with APEX1. Interacts with FMR1 isoform 6. Post-translationally, ubiquitinated at Lys-264 by RNF14 and RNF25 in response to ribosome collisions (ribosome stalling).

The protein localises to the nucleus. Its subcellular location is the cytoplasm. Functionally, ribosomal protein P0 is the functional equivalent of E.coli protein L10. The sequence is that of Large ribosomal subunit protein uL10 (RPLP0) from Homo sapiens (Human).